The primary structure comprises 249 residues: Diaminopimelate epimerase (249 aa).

Substrate contacts are provided by Asn-11 and Asn-60. Cys-69 serves as the catalytic Proton donor. Substrate contacts are provided by residues Gly-70 to Asn-71, Asn-164, and Glu-182 to Arg-183. Catalysis depends on Cys-192, which acts as the Proton acceptor. Substrate is bound at residue Gly-193–Thr-194.

The protein belongs to the diaminopimelate epimerase family. As to quaternary structure, homodimer.

The protein localises to the cytoplasm. The catalysed reaction is (2S,6S)-2,6-diaminopimelate = meso-2,6-diaminopimelate. The protein operates within amino-acid biosynthesis; L-lysine biosynthesis via DAP pathway; DL-2,6-diaminopimelate from LL-2,6-diaminopimelate: step 1/1. Catalyzes the stereoinversion of LL-2,6-diaminopimelate (L,L-DAP) to meso-diaminopimelate (meso-DAP), a precursor of L-lysine and an essential component of the bacterial peptidoglycan. This chain is Diaminopimelate epimerase, found in Campylobacter jejuni (strain RM1221).